We begin with the raw amino-acid sequence, 116 residues long: Phycoerythrin alpha-3 subunit (116 aa).

Residues S53, E63, R64, C67, and K85 each coordinate (2R,3E)-phycoerythrobilin.

This sequence belongs to the phycoerythrin family. Heterotetramer of 2 different alpha chains and 2 identical beta chains which form 2 alpha-beta heterodimers within the heterotetramer. The two alpha-beta heterodimers are rotated to an open configuration in contrast to the closed configuration found in other cryptophyte species due to the insertion of a single amino acid, Asp-65, in a conserved region of the alpha chain. In the open form, the central chromophores are not in physical contact but are separated by a water-filled channel. Post-translationally, contains three phycoerythrobilin chromophores with binding mediated by both the alpha and beta subunits.

Its subcellular location is the plastid. It is found in the chloroplast thylakoid membrane. Its function is as follows. Light-harvesting photosynthetic tetrapyrrole chromophore-protein from the phycobiliprotein complex. The protein is Phycoerythrin alpha-3 subunit of Hemiselmis andersenii (Cryptophyte alga).